The sequence spans 211 residues: Thymidylate kinase (211 aa).

Gly11–Thr18 lines the ATP pocket.

Belongs to the thymidylate kinase family.

It carries out the reaction dTMP + ATP = dTDP + ADP. Functionally, phosphorylation of dTMP to form dTDP in both de novo and salvage pathways of dTTP synthesis. The chain is Thymidylate kinase from Streptococcus equi subsp. equi (strain 4047).